The following is a 272-amino-acid chain: Proteasome subunit beta type-5 (272 aa).

The propeptide at 1–55 (MKLDTSGLESTAPIFRRSDFVFDGLQMTPSFDLPNPTDFDGFQKEAVQMVKPAKG) is removed in mature form. Threonine 56 (nucleophile) is an active-site residue.

Belongs to the peptidase T1B family. In terms of assembly, the 26S proteasome consists of a 20S proteasome core and two 19S regulatory subunits. The 20S proteasome core is composed of 28 subunits that are arranged in four stacked rings, resulting in a barrel-shaped structure. The two end rings are each formed by seven alpha subunits, and the two central rings are each formed by seven beta subunits. The catalytic chamber with the active sites is on the inside of the barrel.

The protein resides in the cytoplasm. It localises to the nucleus. The enzyme catalyses Cleavage of peptide bonds with very broad specificity.. Functionally, the proteasome is a multicatalytic proteinase complex which is characterized by its ability to cleave peptides with Arg, Phe, Tyr, Leu, and Glu adjacent to the leaving group at neutral or slightly basic pH. The proteasome has an ATP-dependent proteolytic activity. The chain is Proteasome subunit beta type-5 from Spinacia oleracea (Spinach).